The primary structure comprises 266 residues: Methionine aminopeptidase 1 (266 aa).

H88 lines the substrate pocket. A divalent metal cation contacts are provided by D106, D117, and H186. H193 contributes to the substrate binding site. A divalent metal cation is bound by residues E219 and E250.

This sequence belongs to the peptidase M24A family. Methionine aminopeptidase type 1 subfamily. In terms of assembly, monomer. Requires Co(2+) as cofactor. Zn(2+) serves as cofactor. Mn(2+) is required as a cofactor. The cofactor is Fe(2+).

It carries out the reaction Release of N-terminal amino acids, preferentially methionine, from peptides and arylamides.. In terms of biological role, removes the N-terminal methionine from nascent proteins. The N-terminal methionine is often cleaved when the second residue in the primary sequence is small and uncharged (Met-Ala-, Cys, Gly, Pro, Ser, Thr, or Val). Requires deformylation of the N(alpha)-formylated initiator methionine before it can be hydrolyzed. This chain is Methionine aminopeptidase 1, found in Mycobacterium tuberculosis (strain CDC 1551 / Oshkosh).